A 244-amino-acid polypeptide reads, in one-letter code: Phosphoadenosine 5'-phosphosulfate reductase (244 aa).

Residue C239 is the Nucleophile; cysteine thiosulfonate intermediate of the active site.

This sequence belongs to the PAPS reductase family. CysH subfamily.

It is found in the cytoplasm. The catalysed reaction is [thioredoxin]-disulfide + sulfite + adenosine 3',5'-bisphosphate + 2 H(+) = [thioredoxin]-dithiol + 3'-phosphoadenylyl sulfate. It functions in the pathway sulfur metabolism; hydrogen sulfide biosynthesis; sulfite from sulfate: step 3/3. Catalyzes the formation of sulfite from phosphoadenosine 5'-phosphosulfate (PAPS) using thioredoxin as an electron donor. This chain is Phosphoadenosine 5'-phosphosulfate reductase, found in Shigella flexneri.